The chain runs to 105 residues: Large ribosomal subunit protein uL24 (105 aa).

This sequence belongs to the universal ribosomal protein uL24 family. As to quaternary structure, part of the 50S ribosomal subunit.

Functionally, one of two assembly initiator proteins, it binds directly to the 5'-end of the 23S rRNA, where it nucleates assembly of the 50S subunit. Its function is as follows. One of the proteins that surrounds the polypeptide exit tunnel on the outside of the subunit. The polypeptide is Large ribosomal subunit protein uL24 (Thioalkalivibrio sulfidiphilus (strain HL-EbGR7)).